The chain runs to 868 residues: Alanine--tRNA ligase (868 aa).

Positions 555, 559, 657, and 661 each coordinate Zn(2+). Positions 828 to 847 (SQVGGKGGGRPDMAQAGGSE) are disordered.

Belongs to the class-II aminoacyl-tRNA synthetase family. The cofactor is Zn(2+).

The protein resides in the cytoplasm. The enzyme catalyses tRNA(Ala) + L-alanine + ATP = L-alanyl-tRNA(Ala) + AMP + diphosphate. Catalyzes the attachment of alanine to tRNA(Ala) in a two-step reaction: alanine is first activated by ATP to form Ala-AMP and then transferred to the acceptor end of tRNA(Ala). Also edits incorrectly charged Ser-tRNA(Ala) and Gly-tRNA(Ala) via its editing domain. In Pseudoalteromonas translucida (strain TAC 125), this protein is Alanine--tRNA ligase.